The following is a 908-amino-acid chain: Protein translocase subunit SecA (908 aa).

Residues Q87, 105–109 (GEGKT), and D512 contribute to the ATP site. The interval 882–908 (DGEKVGRNDPCPCGSGKKYKQCHGKLT) is disordered. Zn(2+) is bound by residues C892, C894, C903, and H904. Positions 898-908 (KKYKQCHGKLT) are enriched in basic residues.

The protein belongs to the SecA family. Monomer and homodimer. Part of the essential Sec protein translocation apparatus which comprises SecA, SecYEG and auxiliary proteins SecDF-YajC and YidC. Zn(2+) is required as a cofactor.

The protein resides in the cell inner membrane. It localises to the cytoplasm. The catalysed reaction is ATP + H2O + cellular proteinSide 1 = ADP + phosphate + cellular proteinSide 2.. Functionally, part of the Sec protein translocase complex. Interacts with the SecYEG preprotein conducting channel. Has a central role in coupling the hydrolysis of ATP to the transfer of proteins into and across the cell membrane, serving both as a receptor for the preprotein-SecB complex and as an ATP-driven molecular motor driving the stepwise translocation of polypeptide chains across the membrane. The chain is Protein translocase subunit SecA from Shewanella amazonensis (strain ATCC BAA-1098 / SB2B).